Here is a 101-residue protein sequence, read N- to C-terminus: DNA-directed RNA polymerase subunit omega (101 aa).

The span at methionine 1–serine 13 shows a compositional bias: low complexity. The segment at methionine 1–threonine 22 is disordered.

This sequence belongs to the RNA polymerase subunit omega family. In terms of assembly, the RNAP catalytic core consists of 2 alpha, 1 beta, 1 beta' and 1 omega subunit. When a sigma factor is associated with the core the holoenzyme is formed, which can initiate transcription.

It carries out the reaction RNA(n) + a ribonucleoside 5'-triphosphate = RNA(n+1) + diphosphate. Its function is as follows. Promotes RNA polymerase assembly. Latches the N- and C-terminal regions of the beta' subunit thereby facilitating its interaction with the beta and alpha subunits. In Rhodococcus jostii (strain RHA1), this protein is DNA-directed RNA polymerase subunit omega.